A 283-amino-acid chain; its full sequence is Galactooligosaccharides transport system permease protein GanQ (283 aa).

Helical transmembrane passes span 13–33, 82–102, 115–135, 137–157, 188–208, and 248–268; these read LLFS…PLLW, ISLF…YAFS, LFLL…FVLA, ILGM…GLIP, IFFQ…AMNG, and TTFA…FIML. The ABC transmembrane type-1 domain maps to 76-268; it reads YVNSMKISLF…IPVAVIFIML (193 aa).

It belongs to the binding-protein-dependent transport system permease family. In terms of assembly, the complex is composed of two ATP-binding proteins (MsmX), two transmembrane proteins (GanP and GanQ) and a solute-binding protein (GanS).

The protein resides in the cell membrane. Its function is as follows. Involved in galactan degradation. Part of the ABC transporter complex GanPQS involved in the uptake of galactooligosaccharides. Responsible for the translocation of the substrate across the membrane. This Bacillus subtilis (strain 168) protein is Galactooligosaccharides transport system permease protein GanQ (ganQ).